A 142-amino-acid chain; its full sequence is UPF0179 protein PYRAB06360 (142 aa).

Belongs to the UPF0179 family.

This Pyrococcus abyssi (strain GE5 / Orsay) protein is UPF0179 protein PYRAB06360.